A 405-amino-acid chain; its full sequence is Protein lin-11 (405 aa).

Residues K17 and K18 each participate in a glycyl lysine isopeptide (Lys-Gly) (interchain with G-Cter in SUMO) cross-link. LIM zinc-binding domains follow at residues 68–124 (CAAC…RRYS) and 127–187 (CAGC…TATK). Over residues 189–205 (STPTSIHRPVSNGSECN) the composition is skewed to polar residues. 2 disordered regions span residues 189-208 (STPT…NSDV) and 224-246 (GEGD…GPRT). Residues 241–300 (RRGPRTTIKAKQLETLKNAFAATPKPTRHIREQLAAETGLNMRVIQVWFQNRRSKERRMK) constitute a DNA-binding region (homeobox).

Expressed in ADL, AVJL, AIZL, RICL, RIF and AVG neurons.

It localises to the nucleus. In terms of biological role, probable transcription factor which is required for asymmetric division of vulval blast cells. Involved in olfactory plasticity probably by regulating the expression of transcription factor mbr-1 in RIF neurons. Plays a role in the chemorepulsive response toward ascaroside pheromones mediated by the ADL sensory neurons, probably by regulating E-box motif 5'-CANNTG-3' containing target genes in the ADL neurons. Plays a role in the differentiation of the ADL sensory neurons. The protein is Protein lin-11 (lin-11) of Caenorhabditis elegans.